Consider the following 137-residue polypeptide: Phosphomevalonate dehydratase small subunit (137 aa).

Serine 65 functions as the Proton acceptor in the catalytic mechanism.

Belongs to the AcnX type II small subunit family. Heterodimer composed of a large subunit (PMDh-L) and a small subunit (PMDh-S).

It catalyses the reaction (R)-5-phosphomevalonate = (2E)-3-methyl-5-phosphooxypent-2-enoate + H2O. The protein operates within isoprenoid biosynthesis; isopentenyl diphosphate biosynthesis via mevalonate pathway. In terms of biological role, component of a hydro-lyase that catalyzes the dehydration of mevalonate 5-phosphate (MVA5P) to form trans-anhydromevalonate 5-phosphate (tAHMP). Involved in the archaeal mevalonate (MVA) pathway, which provides fundamental precursors for isoprenoid biosynthesis, such as isopentenyl diphosphate (IPP) and dimethylallyl diphosphate (DMAPP). This chain is Phosphomevalonate dehydratase small subunit, found in Methanococcoides burtonii (strain DSM 6242 / NBRC 107633 / OCM 468 / ACE-M).